Here is a 200-residue protein sequence, read N- to C-terminus: Large ribosomal subunit protein uL4 (200 aa).

Residues glycine 38–arginine 68 are disordered. Basic residues predominate over residues glycine 54–glycine 65.

It belongs to the universal ribosomal protein uL4 family. Part of the 50S ribosomal subunit.

One of the primary rRNA binding proteins, this protein initially binds near the 5'-end of the 23S rRNA. It is important during the early stages of 50S assembly. It makes multiple contacts with different domains of the 23S rRNA in the assembled 50S subunit and ribosome. In terms of biological role, forms part of the polypeptide exit tunnel. The polypeptide is Large ribosomal subunit protein uL4 (Pseudomonas fluorescens (strain SBW25)).